Reading from the N-terminus, the 528-residue chain is Autophagy-related protein 22 (528 aa).

Residues 1 to 98 are Cytoplasmic-facing; sequence MSYGTINDMN…IFVDTSSFAL (98 aa). Residues 99 to 119 traverse the membrane as a helical segment; the sequence is YVFSLSVLFQTIIVISVSGIV. The Vacuolar segment spans residues 120–130; the sequence is DLWGSVKFKGR. A helical membrane pass occupies residues 131 to 151; it reads ILVWFGIVGALSTVAISKLND. The Cytoplasmic portion of the chain corresponds to 152–153; that stretch reads TQ. Residues 154–174 form a helical membrane-spanning segment; sequence IYSLAGLYIVANGCFGVINVV. At 175-210 the chain is on the vacuolar side; it reads GNSLLPIFVKDSLKCQSQGAYEPDKVDSLTTVISGR. The helical transmembrane segment at 211–231 threads the bilayer; the sequence is GASLGYSSALIVQIVSMFLVA. At 232 to 241 the chain is on the cytoplasmic side; sequence SKKGSKQDVQ. Residues 242-262 form a helical membrane-spanning segment; the sequence is VAVLFVGIWWFVWQLPMIWLI. Residues 263–318 lie on the Vacuolar side of the membrane; that stretch reads DDVTIPIRVDDSTLASARSPYPGEQDALGQLNWKNYLSYGWVSLFESFKHARLLKD. Serine 278 bears the Phosphoserine mark. A helical transmembrane segment spans residues 319–339; the sequence is VMIFLIAWFIISDSITTINST. The Cytoplasmic portion of the chain corresponds to 340–352; it reads AVLFSKAELHMST. A helical membrane pass occupies residues 353–373; sequence LNLIMISVLTVVNAMLGAFMI. At 374–388 the chain is on the vacuolar side; that stretch reads PQFLATKFRWTSSQT. Residues 389–409 traverse the membrane as a helical segment; the sequence is LMYIIIWASFIPFYGILGFFF. Residues 410–417 lie on the Cytoplasmic side of the membrane; the sequence is NAFGLKHK. Residues 418–438 form a helical membrane-spanning segment; it reads FEMFLLAIWYGLSLGGLSAVS. Residues 439–485 lie on the Vacuolar side of the membrane; sequence RSVFSLIVPPGKESTFFSMFSITDKGSSILGPFLVGLLTDKTHNIRY. The helical transmembrane segment at 486–506 threads the bilayer; it reads SFYFFFLLLMLSLPVLNCLDV. At 507–528 the chain is on the cytoplasmic side; the sequence is KRGRREAEELSQVLPESERRLD.

The protein belongs to the ATG22 family.

Its subcellular location is the vacuole membrane. In terms of biological role, vacuolar effluxer which mediate the efflux of leucine and other amino acids resulting from autophagic degradation. The release of autophagic amino acids allows the maintenance of protein synthesis and viability during nitrogen starvation. This Saccharomyces cerevisiae (strain ATCC 204508 / S288c) (Baker's yeast) protein is Autophagy-related protein 22 (ATG22).